The following is a 223-amino-acid chain: Killer cell lectin-like receptor subfamily B member 1B allele A (223 aa).

At 1-45 the chain is on the cytoplasmic side; the sequence is MDTAVVYADLHLARTGEPKREPPPSLSPDTCQCPRWHRLALKLGC. The ITIM motif signature appears at 5–10; the sequence is VVYADL. Residues 31–34 carry the LCK-binding motif motif; the sequence is CQCP. The helical; Signal-anchor for type II membrane protein transmembrane segment at 46–66 threads the bilayer; that stretch reads ACLILLVLSVIGLGVLVLTLL. Residues 67–223 lie on the Extracellular side of the membrane; sequence QKPLIQNSPA…LKRESTCNDS (157 aa). The 111-residue stretch at 101 to 211 folds into the C-type lectin domain; it reads HQDKCFHVSQ…CDSDNIWICQ (111 aa). 2 disulfide bridges follow: C122/C210 and C189/C202.

Homodimer; disulfide-linked. Interacts with tyrosine kinase LCK. Binds PTPN6/SHP-1 in a phosphorylation-dependent manner. As to expression, expressed in a subset of natural killer cells.

Its subcellular location is the membrane. Its function is as follows. Receptor for CLEC2D/OCIL. Ligand-binding contributes to inhibition of cytotoxic natural killer (NK) cells. May mediate MHC class I-independent 'missing-self' recognition of allografts, tumor cells and virus-infected cells. This is Killer cell lectin-like receptor subfamily B member 1B allele A from Rattus norvegicus (Rat).